A 138-amino-acid polypeptide reads, in one-letter code: Large ribosomal subunit protein eL27 (138 aa).

The protein belongs to the eukaryotic ribosomal protein eL27 family.

This chain is Large ribosomal subunit protein eL27 (RPL27), found in Solanum tuberosum (Potato).